The sequence spans 167 residues: Probable chemoreceptor glutamine deamidase CheD (167 aa).

Belongs to the CheD family.

It carries out the reaction L-glutaminyl-[protein] + H2O = L-glutamyl-[protein] + NH4(+). Its function is as follows. Probably deamidates glutamine residues to glutamate on methyl-accepting chemotaxis receptors (MCPs), playing an important role in chemotaxis. The protein is Probable chemoreceptor glutamine deamidase CheD of Moorella thermoacetica (strain ATCC 39073 / JCM 9320).